The following is a 189-amino-acid chain: Cancer/testis antigen family 45 member A2 (189 aa).

The protein belongs to the CT45 family. In terms of tissue distribution, testis specific. Expressed in cancer cell lines.

The sequence is that of Cancer/testis antigen family 45 member A2 from Homo sapiens (Human).